We begin with the raw amino-acid sequence, 398 residues long: Acetate kinase (398 aa).

A Mg(2+)-binding site is contributed by N7. K14 serves as a coordination point for ATP. Substrate is bound at residue R96. The active-site Proton donor/acceptor is D153. ATP contacts are provided by residues 210–214 (HLGNG), 284–286 (DLR), and 332–336 (GIGEH). E385 contributes to the Mg(2+) binding site.

Belongs to the acetokinase family. As to quaternary structure, homodimer. Requires Mg(2+) as cofactor. Mn(2+) serves as cofactor.

Its subcellular location is the cytoplasm. The enzyme catalyses acetate + ATP = acetyl phosphate + ADP. It functions in the pathway metabolic intermediate biosynthesis; acetyl-CoA biosynthesis; acetyl-CoA from acetate: step 1/2. Functionally, catalyzes the formation of acetyl phosphate from acetate and ATP. Can also catalyze the reverse reaction. This chain is Acetate kinase, found in Acaryochloris marina (strain MBIC 11017).